Consider the following 219-residue polypeptide: uncharacterized protein (219 aa).

An N-terminal signal peptide occupies residues Met1–Ala15. N-linked (GlcNAc...) asparagine glycosylation occurs at Asn118. Positions Gly138–Gly174 are disordered.

As to expression, component of the acid-insoluble and acid-soluble organic matrix of calcified layers of the shell (at protein level).

The protein localises to the secreted. This is an uncharacterized protein from Lottia gigantea (Giant owl limpet).